Here is a 134-residue protein sequence, read N- to C-terminus: uncharacterized protein (134 aa).

This is an uncharacterized protein from Bacillus subtilis (strain 168).